The chain runs to 1096 residues: Lysine-specific demethylase 4B (1096 aa).

Positions 15–57 (IMTFRPTMEEFKDFNKYVAYIESQGAHRAGLAKIIPPKEWKPR) constitute a JmjN domain. A 2-oxoglutarate-binding site is contributed by Tyr-133. The JmjC domain occupies 146–309 (VAQWNIGSLR…YGKVATQCTC (164 aa)). Residues His-189 and Glu-191 each contribute to the Fe cation site. 2-oxoglutarate contacts are provided by Asn-199 and Lys-207. Cys-235 and His-241 together coordinate Zn(2+). Lys-242 is a 2-oxoglutarate binding site. Residue His-277 coordinates Fe cation. Zn(2+)-binding residues include Cys-307 and Cys-309. The span at 369 to 382 (LLRRSHRKRSQPKK) shows a compositional bias: basic residues. Disordered regions lie at residues 369 to 478 (LLRR…SEEA) and 557 to 649 (KGPT…VSDP). Over residues 391-406 (PGEGTAGAALLEEAGG) the composition is skewed to low complexity. The segment covering 413 to 425 (GPEVDPEEEEEEP) has biased composition (acidic residues). A compositionally biased stretch (basic and acidic residues) spans 430–443 (HGREAEGAEEDGRG). A compositionally biased stretch (basic residues) spans 444 to 458 (KLRPTKAKSERKKKS). Ser-566 is subject to Phosphoserine. Lys-602 is subject to N6-acetyllysine. Residues 632–648 (SSDEEASPFSGEEDVSD) are compositionally biased toward acidic residues. The segment at 731–789 (MCFTSGGENTEPLPANSYIGDDGTSPLIACGKCCLQVHASCYGIRPELVNEGWTCSRCA) adopts a PHD-type 1 zinc-finger fold. The segment at 794-827 (TAECCLCNLRGGALQMTTDRRWIHVICAIAVPEA) adopts a C2HC pre-PHD-type zinc-finger fold. The PHD-type 2 zinc finger occupies 850–907 (LKCVYCRKRMKKVSGACIQCSYEHCSTSFHVTCAHAAGVLMEPDDWPYVVSITCLKHK). Tudor domains are found at residues 917–974 (RAVS…CVQL) and 975–1031 (GPPS…EELP). The segment at 1037-1073 (RLSLSTGAPQEPAFSGEEAKAAKRPRVGTPLATEDSG) is disordered. Phosphothreonine is present on Thr-1065.

Belongs to the JHDM3 histone demethylase family. It depends on Fe(2+) as a cofactor.

The protein localises to the nucleus. The enzyme catalyses N(6),N(6),N(6)-trimethyl-L-lysyl(9)-[histone H3] + 2 2-oxoglutarate + 2 O2 = N(6)-methyl-L-lysyl(9)-[histone H3] + 2 formaldehyde + 2 succinate + 2 CO2. Functionally, histone demethylase that specifically demethylates 'Lys-9' of histone H3, thereby playing a role in histone code. Does not demethylate histone H3 'Lys-4', H3 'Lys-27', H3 'Lys-36' nor H4 'Lys-20'. Only able to demethylate trimethylated H3 'Lys-9', with a weaker activity than KDM4A, KDM4C and KDM4D. Demethylation of Lys residue generates formaldehyde and succinate. Plays a critical role in the development of the central nervous system (CNS). The protein is Lysine-specific demethylase 4B (KDM4B) of Homo sapiens (Human).